The primary structure comprises 879 residues: Phosphoenolpyruvate carboxylase (879 aa).

Residues H138 and K545 contribute to the active site.

It belongs to the PEPCase type 1 family. Requires Mg(2+) as cofactor.

It catalyses the reaction oxaloacetate + phosphate = phosphoenolpyruvate + hydrogencarbonate. Its function is as follows. Forms oxaloacetate, a four-carbon dicarboxylic acid source for the tricarboxylic acid cycle. This chain is Phosphoenolpyruvate carboxylase, found in Histophilus somni (strain 2336) (Haemophilus somnus).